The sequence spans 423 residues: UPF0229 protein PSEEN0423 (423 aa).

The interval 85 to 107 (GEHIARPQGGGGGGGRGKAGNSG) is disordered. Positions 92–107 (QGGGGGGGRGKAGNSG) are enriched in gly residues.

This sequence belongs to the UPF0229 family.

The protein is UPF0229 protein PSEEN0423 of Pseudomonas entomophila (strain L48).